A 594-amino-acid polypeptide reads, in one-letter code: Frizzled and smoothened-like protein A (594 aa).

The N-terminal stretch at 1–22 is a signal peptide; it reads MVDIRKSLFFIIFFIFYNYVNS. Topologically, residues 23-248 are extracellular; the sequence is QKAINSDAFC…NEWYQFKDLT (226 aa). An FZ domain is found at 27–173; sequence NSDAFCQKKT…SNYDLQCLNI (147 aa). 2 disulfide bridges follow: C32–C98 and C41–C91. 2 N-linked (GlcNAc...) asparagine glycosylation sites follow: N55 and N106. Cysteines 117 and 170 form a disulfide. N-linked (GlcNAc...) asparagine glycosylation is found at N182, N189, N195, and N206. Residues 249-269 form a helical membrane-spanning segment; that stretch reads TVTGVISFVCIFFNIFIYGFL. Residues 270-277 lie on the Cytoplasmic side of the membrane; that stretch reads NKKHDRHT. A helical membrane pass occupies residues 278 to 298; the sequence is IGILCLSFSLWCCMLSDLIVA. Topologically, residues 299–329 are extracellular; the sequence is SSPDYSLVCPEPGRFARIHDSRCVANGIIFQ. A helical membrane pass occupies residues 330 to 350; that stretch reads WGAVCTTMFWSAMAIDLYLVI. Topologically, residues 351-361 are cytoplasmic; it reads KKLSLPAFTVK. The helical transmembrane segment at 362 to 382 threads the bilayer; that stretch reads YFVAAIFTLALLFTTVPLAWD. Over 383 to 403 the chain is Extracellular; it reads DYGYGFGGVGCWIMSNSVQNG. The helical transmembrane segment at 404-424 threads the bilayer; it reads CFWIPMLICLLIGAVSICLII. At 425-448 the chain is on the cytoplasmic side; sequence YEIVKVFKNVGRSGISIILANARL. The helical transmembrane segment at 449–469 threads the bilayer; it reads FGIVSFIFIEYIYLFVYHFWV. The Extracellular portion of the chain corresponds to 470 to 507; the sequence is QENTEKFTQNITDWVICVQTTGSSDGCPLPKAVPYATQ. The N-linked (GlcNAc...) asparagine glycan is linked to N479. A helical transmembrane segment spans residues 508–528; sequence FIFLFFLRLLGIEVCIFYGIN. Over 529 to 594 the chain is Cytoplasmic; the sequence is SRSKNIILES…SKNGGDDDDL (66 aa).

Belongs to the G-protein coupled receptor Fz/Smo family.

It localises to the membrane. In Dictyostelium discoideum (Social amoeba), this protein is Frizzled and smoothened-like protein A (fslA).